A 112-amino-acid polypeptide reads, in one-letter code: Large ribosomal subunit protein eL33y (112 aa).

The protein belongs to the eukaryotic ribosomal protein eL33 family.

The sequence is that of Large ribosomal subunit protein eL33y (RPL35AC) from Arabidopsis thaliana (Mouse-ear cress).